The chain runs to 239 residues: MSKFVPENVQKKLARDEKLRKAKAEQRKASSAQMKQRKAEWISKAQKYAAEYEAAEKKIVDEKRKARKTGAFYVPAEAKVAFAIRIRGVNQLHPDVKRVLRLFRLRQLHNGAFFRVNKASLNMIKRVLPFITFGYPTRNTISKLIYKRGFAKVNGQRIPLTDNTIVEKSLGKFGITCVEDLIHEITTVGPHFKEANNFLWPFKLDTPRGGFRNKRHAYHQGGDWGNREVYINDLVKAML.

The disordered stretch occupies residues M1–R37. Over residues V9–K28 the composition is skewed to basic and acidic residues.

The protein belongs to the universal ribosomal protein uL30 family.

This is Large ribosomal subunit protein uL30 (RPL7) from Tetrahymena thermophila.